We begin with the raw amino-acid sequence, 329 residues long: Phospholipid scramblase 4 (329 aa).

The segment at 1-51 (MSGVVPTAPEQPAGEMENQTKPPDPRPDAPPEYNSHFLPGPPGTAVPPPTG) is disordered. The interval 1 to 98 (MSGVVPTAPE…PMPNQSVPIT (98 aa)) is proline-rich domain (PRD). Topologically, residues 1–303 (MSGVVPTAPE…IHFPLDLDVK (303 aa)) are cytoplasmic. The SH3-binding 1 motif lies at 18-25 (NQTKPPDP). The PPxY motif motif lies at 30 to 33 (PPEY). Over residues 39-51 (PGPPGTAVPPPTG) the composition is skewed to pro residues. The SH3-binding 2 signature appears at 41-49 (PPGTAVPPP). Phosphotyrosine; by ABL occurs at positions 83 and 88. An SH3-binding 3 motif is present at residues 98–106 (TWMPGPTPM). 5 S-palmitoyl cysteine lipidation sites follow: C197, C198, C199, C201, and C202. Positions 271–283 (NIGSIIRKWNGLL) match the Nuclear localization signal motif. A helical membrane pass occupies residues 304–320 (MKAMIFGACFLIDFMYF). The Extracellular portion of the chain corresponds to 321–329 (ERSPPQRSR).

Belongs to the phospholipid scramblase family. Interacts with PDCD6. Interacts with KPNA2; this interaction mediates the nucleus import of PLSCR4. Requires Ca(2+) as cofactor. Mg(2+) is required as a cofactor. The cofactor is Zn(2+). In terms of tissue distribution, expressed in heart, brain, placenta, lung, liver, kidney, pancreas, spleen, thymus, prostate, testis, uterus, small intestine and colon. Not detected in peripheral blood lymphocytes.

It localises to the cell membrane. The protein localises to the nucleus. The enzyme catalyses a 1,2-diacyl-sn-glycero-3-phosphocholine(in) = a 1,2-diacyl-sn-glycero-3-phosphocholine(out). The catalysed reaction is a 1,2-diacyl-sn-glycero-3-phospho-L-serine(in) = a 1,2-diacyl-sn-glycero-3-phospho-L-serine(out). Functionally, catalyzes metal ion-induced ATP-independent rapid bidirectional and non-specific movement of phospholipids (lipid scrambling or lipid flip-flop) between the inner and outer leaflet of the plasma membrane and participates in the redistribution of phospholipids between membrane leaflets. Metal ions bind to the calcium-binding site and induce conformation change in the protein. Has a greater affi nity for Ca(2+) than Mg(2+) and Zn(2+). The chain is Phospholipid scramblase 4 from Homo sapiens (Human).